A 124-amino-acid polypeptide reads, in one-letter code: Fluoride-specific ion channel FluC (124 aa).

The next 4 membrane-spanning stretches (helical) occupy residues methionine 1–alanine 21, threonine 38–valine 58, glycine 69–valine 89, and valine 97–alanine 117. The Na(+) site is built by glycine 76 and threonine 79.

This sequence belongs to the fluoride channel Fluc/FEX (TC 1.A.43) family.

The protein localises to the cell inner membrane. The enzyme catalyses fluoride(in) = fluoride(out). With respect to regulation, na(+) is not transported, but it plays an essential structural role and its presence is essential for fluoride channel function. Its function is as follows. Fluoride-specific ion channel. Important for reducing fluoride concentration in the cell, thus reducing its toxicity. This is Fluoride-specific ion channel FluC from Pseudomonas fluorescens (strain ATCC BAA-477 / NRRL B-23932 / Pf-5).